We begin with the raw amino-acid sequence, 345 residues long: GTPase Obg (345 aa).

One can recognise an Obg domain in the interval 1–158; that stretch reads MFIDSVKITL…RLVRLELKLI (158 aa). An OBG-type G domain is found at 159-339; that stretch reads ADVGLVGFPN…LKFMLLEEIK (181 aa). Residues 165 to 172, 190 to 194, 212 to 215, 280 to 283, and 320 to 322 each bind GTP; these read GFPNVGKS, FTTLT, DIPG, SKSD, and SSL. Residues serine 172 and threonine 192 each coordinate Mg(2+).

The protein belongs to the TRAFAC class OBG-HflX-like GTPase superfamily. OBG GTPase family. In terms of assembly, monomer. It depends on Mg(2+) as a cofactor.

It localises to the cytoplasm. In terms of biological role, an essential GTPase which binds GTP, GDP and possibly (p)ppGpp with moderate affinity, with high nucleotide exchange rates and a fairly low GTP hydrolysis rate. Plays a role in control of the cell cycle, stress response, ribosome biogenesis and in those bacteria that undergo differentiation, in morphogenesis control. This Campylobacter jejuni subsp. doylei (strain ATCC BAA-1458 / RM4099 / 269.97) protein is GTPase Obg.